A 378-amino-acid polypeptide reads, in one-letter code: Mating-type protein MAT-1 (378 aa).

The alpha box DNA-binding region spans 60–117 (KAKKALNAFVGFRCYYIAIPAFKPWPMKKLSNLISLLWEGDPNKSLWSLMAKAWSNIR). A disordered region spans residues 235-256 (SQVDQARVAARNRRRAKRQSAR). Over residues 244 to 253 (ARNRRRAKRQ) the composition is skewed to basic residues.

The protein belongs to the MATALPHA1 family.

It localises to the nucleus. Its function is as follows. Mating type proteins are sequence specific DNA-binding proteins that act as master switches in fungal differentiation by controlling gene expression in a cell type-specific fashion. Transcriptional activator that induces the transcription of alpha-specific genes. In Cochliobolus ellisii (Curvularia ellisii), this protein is Mating-type protein MAT-1 (MAT1).